Reading from the N-terminus, the 314-residue chain is MSLINWFEEKRKFGGLIGAFIEKATKGYVLSEREKDRYINVDTNKGLWTRCDNCENMLYIKFLKQNKGVCEECGYHLQINSTERIELLIDRDTWIPMDEDMVAQDVLKFSDEDSYRNRISLSQKRTGLTDAVQTGIGNLNGTPVALGVMDFQSMGGSMGSVVGEKITRLIEYATQESLPLIIVCASGGARMQEGTLSSMQMAKISSVSQIHQVQKKLLYIAVLTYPTTGGVTASFGMLGDIIIAEPKAYIAFAGKRVIEQTLRQKIPDGFQVAESLFDHGLLDSIVPRNLLKGVLSEIFELYDLAPWKEKNNQV.

The CoA carboxyltransferase N-terminal domain occupies 47-314; the sequence is LWTRCDNCEN…APWKEKNNQV (268 aa). Cys-51, Cys-54, Cys-70, and Cys-73 together coordinate Zn(2+). Residues 51-73 form a C4-type zinc finger; the sequence is CDNCENMLYIKFLKQNKGVCEEC.

It belongs to the AccD/PCCB family. Acetyl-CoA carboxylase is a heterohexamer composed of biotin carboxyl carrier protein, biotin carboxylase and 2 subunits each of ACCase subunit alpha and ACCase plastid-coded subunit beta (accD). The cofactor is Zn(2+).

Its subcellular location is the plastid. It localises to the chloroplast stroma. It catalyses the reaction N(6)-carboxybiotinyl-L-lysyl-[protein] + acetyl-CoA = N(6)-biotinyl-L-lysyl-[protein] + malonyl-CoA. It participates in lipid metabolism; malonyl-CoA biosynthesis; malonyl-CoA from acetyl-CoA: step 1/1. Component of the acetyl coenzyme A carboxylase (ACC) complex. Biotin carboxylase (BC) catalyzes the carboxylation of biotin on its carrier protein (BCCP) and then the CO(2) group is transferred by the transcarboxylase to acetyl-CoA to form malonyl-CoA. The chain is Acetyl-coenzyme A carboxylase carboxyl transferase subunit beta, chloroplastic from Angiopteris lygodiifolia (Turnip fern).